Here is a 546-residue protein sequence, read N- to C-terminus: MWRPAAKTTGTNDVPLANKRRFGLPEEGPPSNSPSYAPRPAADIQYFNGRQERERDARDDRERPRDDYDRRRDDYVRDDRDRRYDDYPRDGHSDRRDERSKWDEGDRREAPRGRERSRDRGDSNEDGPRKRRSRWGDASAKVNVPGMPVAVMGNVSQTELDNYAIHVRLEEINRKLRTGDVVPPEGQRSPSPTPQYDAYGRRTNTRELRYRKKLEDERTRLIDRAVKSDPNFRPPVDFQHKRGSRPQDKVYIPVKEFPEINFFGLLVGPRGNSLKKMERESGAKISIRGKGSVKEGKGRAGNFPQDEEDELHCLITADDESKVKTCVALINKVIETAASTPEGENDHKRNQLRELASLNGTLRDDENQLCQNCGEKGHRRWECPQQRVYSANVICRICGGAGHMARDCRGRGDPSLTQNKQTAFDSEYTALMAELGEGGGSTPGSAPAAAIGAPGAIPPQSRVPPWRLPENWQTNSGGFRGPPNFQAQGYQQAAPGAAAYGQQAYPGYAGYQTGAVSGYGSPATGGADAYAAYYASMGQQAPAAAV.

Disordered regions lie at residues 1 to 141 and 178 to 199; these read MWRP…ASAK and TGDV…YDAY. Residues 50–128 show a composition bias toward basic and acidic residues; that stretch reads RQERERDARD…DRGDSNEDGP (79 aa). In terms of domain architecture, KH spans 251 to 330; the sequence is YIPVKEFPEI…SKVKTCVALI (80 aa). CCHC-type zinc fingers lie at residues 368–385 and 393–410; these read QLCQ…ECPQ and VICR…DCRG.

It belongs to the BBP/SF1 family.

Its subcellular location is the nucleus. Its function is as follows. Necessary for the splicing of pre-mRNA. Has a role in the recognition of the branch site (5'-UACUAAC-3'), the pyrimidine tract and the 3'-splice site at the 3'-end of introns. This chain is Branchpoint-bridging protein (BBP), found in Cryptococcus neoformans var. neoformans serotype D (strain B-3501A) (Filobasidiella neoformans).